We begin with the raw amino-acid sequence, 299 residues long: Glycine--tRNA ligase alpha subunit (299 aa).

Belongs to the class-II aminoacyl-tRNA synthetase family. As to quaternary structure, tetramer of two alpha and two beta subunits.

The protein resides in the cytoplasm. It carries out the reaction tRNA(Gly) + glycine + ATP = glycyl-tRNA(Gly) + AMP + diphosphate. The chain is Glycine--tRNA ligase alpha subunit (glyQ) from Synechocystis sp. (strain ATCC 27184 / PCC 6803 / Kazusa).